The primary structure comprises 1142 residues: SNF1-activating kinase 1 (1142 aa).

Residues 22–41 are disordered; the sequence is ELEKSGTSSSVSLRSPTKSS. Threonine 43 bears the Phosphothreonine mark. Polar residues predominate over residues 82–93; that stretch reads QHQQHISSSLAK. The tract at residues 82 to 107 is disordered; sequence QHQQHISSSLAKTPTTTSSFCSSGSS. A compositionally biased stretch (low complexity) spans 94–107; sequence TPTTTSSFCSSGSS. A Protein kinase domain is found at 133–448; the sequence is YEIIKELGHG…IPAIKKHPFV (316 aa). ATP-binding positions include 139–147 and lysine 162; that span reads LGHGQHGKV. The active-site Proton acceptor is aspartate 277. 6 disordered regions span residues 634–678, 694–799, 825–875, 919–971, 1005–1027, and 1066–1142; these read SPEA…VLPQ, NSLL…NSPI, SHFN…AYSE, KSSL…QKGS, SQPI…KATT, and STNA…SALP. Polar residues predominate over residues 640 to 656; it reads SVSSVPNLPSAPSSTRL. Low complexity predominate over residues 694–706; that stretch reads NSLLRNSSSHLTS. The segment covering 707-741 has biased composition (polar residues); sequence YNSGRPSSRTGRMNSRNQNLPKIPNSLSKISTTKL. Positions 742–751 are enriched in basic and acidic residues; that stretch reads TELRVPKDSE. Residues 785–799 are compositionally biased toward polar residues; it reads NINSSDKSGSKNSPI. Low complexity-rich tracts occupy residues 835-868 and 920-936; these read SSQS…RNSS and SSLN…SSSS. Positions 958 to 971 are enriched in polar residues; that stretch reads SKLSELSNSPQKGS. The residue at position 964 (serine 964) is a Phosphoserine. Residues 1096 to 1111 are compositionally biased toward basic and acidic residues; the sequence is NDEHARNTSCHGDKGQ. The residue at position 1126 (serine 1126) is a Phosphoserine. The segment covering 1133–1142 has biased composition (basic and acidic residues); sequence NEEKRRSALP.

The protein belongs to the protein kinase superfamily. Ser/Thr protein kinase family. As to quaternary structure, associates with the SNF1 kinase complex. Interacts with SNF1 and REG1. Post-translationally, autophosphorylated.

It localises to the cytoplasm. It carries out the reaction L-seryl-[protein] + ATP = O-phospho-L-seryl-[protein] + ADP + H(+). The catalysed reaction is L-threonyl-[protein] + ATP = O-phospho-L-threonyl-[protein] + ADP + H(+). In terms of biological role, serine/threonine-protein kinase that phosphorylates SNF1, the catalytic subunit of the SNF1 kinase complex. Acts as an activator of the SNF1 kinase complex and controls its nuclear localization upon glucose and nitrogen depletion. Also required for SNF1 kinase activation under other stress conditions like alkaline pH or presence of cadmium. The sequence is that of SNF1-activating kinase 1 (SAK1) from Saccharomyces cerevisiae (strain ATCC 204508 / S288c) (Baker's yeast).